The chain runs to 358 residues: Transmembrane protein 144 homolog B (358 aa).

10 helical membrane passes run 6 to 26, 35 to 55, 60 to 79, 86 to 108, 122 to 142, 211 to 231, 244 to 264, 279 to 299, 307 to 327, and 337 to 357; these read VIGYIGAAVASLFFGSNYVPV, LAFTWVMSVGTLVVAYCAMFI, IFDPWGLLGGTLWSIGNFCV, IGIGLGLLLWCCSSIITGYFTGK, PALNWIGFACIVAAVIFFFFI, ILGIVLSVFSGIMYGVNMVPM, LSFVFCHFSGIFLANTAVFIV, IFPSFFSGLLWGIANVGLMVA, IGFPMGSGGPMIVSSLWSVFY, and LLILLISFIFLGAGITILALS.

It belongs to the TMEM144 family.

Its subcellular location is the membrane. The sequence is that of Transmembrane protein 144 homolog B (tmem144B) from Dictyostelium discoideum (Social amoeba).